We begin with the raw amino-acid sequence, 141 residues long: Large ribosomal subunit protein uL11 (141 aa).

Belongs to the universal ribosomal protein uL11 family. In terms of assembly, part of the ribosomal stalk of the 50S ribosomal subunit. Interacts with L10 and the large rRNA to form the base of the stalk. L10 forms an elongated spine to which L12 dimers bind in a sequential fashion forming a multimeric L10(L12)X complex. Post-translationally, one or more lysine residues are methylated.

Its function is as follows. Forms part of the ribosomal stalk which helps the ribosome interact with GTP-bound translation factors. This is Large ribosomal subunit protein uL11 from Trichodesmium erythraeum (strain IMS101).